The following is a 103-amino-acid chain: Small ribosomal subunit protein uS14c (103 aa).

The tract at residues 34–56 (KVSPLSLSEKTKMQEKLQSLPRN) is disordered.

This sequence belongs to the universal ribosomal protein uS14 family. As to quaternary structure, part of the 30S ribosomal subunit.

The protein resides in the plastid. The protein localises to the chloroplast. In terms of biological role, binds 16S rRNA, required for the assembly of 30S particles. The protein is Small ribosomal subunit protein uS14c of Saccharum hybrid (Sugarcane).